We begin with the raw amino-acid sequence, 258 residues long: MTQHSRDTPQFYLTAPSPCPYLPGRQERKVFTHLVGPKAGDLNDLLTHGGFRRSQSIAYRPACDQCRACVSVRVVANEFRPSRAQRKILGRNADVVGELRSPVPTSEQYSVFRAYLDRRHRDGGMADMTVLDYAMMVEDSHVKTRLIEYRRRKLEPGSTGRGEELLAVALTDVLNDGLSMVYSFFEPAEDRRSLGTFMILDHIARARRLGLPYVYLGYWIDGSQKMDYKGRYLPQQRLAPSGWERVGAEDDGLIEPQE.

This sequence belongs to the R-transferase family. Bpt subfamily.

It localises to the cytoplasm. It carries out the reaction N-terminal L-glutamyl-[protein] + L-leucyl-tRNA(Leu) = N-terminal L-leucyl-L-glutamyl-[protein] + tRNA(Leu) + H(+). The enzyme catalyses N-terminal L-aspartyl-[protein] + L-leucyl-tRNA(Leu) = N-terminal L-leucyl-L-aspartyl-[protein] + tRNA(Leu) + H(+). In terms of biological role, functions in the N-end rule pathway of protein degradation where it conjugates Leu from its aminoacyl-tRNA to the N-termini of proteins containing an N-terminal aspartate or glutamate. This chain is Aspartate/glutamate leucyltransferase, found in Rhodopseudomonas palustris (strain BisA53).